A 339-amino-acid chain; its full sequence is BTB/POZ domain-containing protein KCTD9 (339 aa).

The 80-residue stretch at 3–82 (RVTLFLNGSP…PQTDARPPGG (80 aa)) folds into the KHA domain. Ser-11 is modified (phosphoserine). Residues 89-161 (DWLTLNVGGR…LRHGQLIVND (73 aa)) enclose the BTB domain. Pentapeptide repeat domains are found at residues 223 to 247 (ANLQ…NFED), 253 to 292 (ANLE…NLRG), and 293 to 327 (ATLA…IFEE).

As to quaternary structure, forms pentamers. Component of a complex mades of five KCTD9 and five CUL3 subunits.

Its pathway is protein modification; protein ubiquitination. In terms of biological role, substrate-specific adapter of a BCR (BTB-CUL3-RBX1) E3 ubiquitin-protein ligase complex, which mediates the ubiquitination of target proteins, leading to their degradation by the proteasome. This chain is BTB/POZ domain-containing protein KCTD9 (Kctd9), found in Mus musculus (Mouse).